Reading from the N-terminus, the 126-residue chain is Aspartate 1-decarboxylase (126 aa).

Catalysis depends on serine 25, which acts as the Schiff-base intermediate with substrate; via pyruvic acid. Serine 25 carries the post-translational modification Pyruvic acid (Ser). Threonine 57 contributes to the substrate binding site. The active-site Proton donor is tyrosine 58. Residue 73-75 (GGA) coordinates substrate.

Belongs to the PanD family. In terms of assembly, heterooctamer of four alpha and four beta subunits. Requires pyruvate as cofactor. Post-translationally, is synthesized initially as an inactive proenzyme, which is activated by self-cleavage at a specific serine bond to produce a beta-subunit with a hydroxyl group at its C-terminus and an alpha-subunit with a pyruvoyl group at its N-terminus.

The protein localises to the cytoplasm. The catalysed reaction is L-aspartate + H(+) = beta-alanine + CO2. The protein operates within cofactor biosynthesis; (R)-pantothenate biosynthesis; beta-alanine from L-aspartate: step 1/1. Functionally, catalyzes the pyruvoyl-dependent decarboxylation of aspartate to produce beta-alanine. The protein is Aspartate 1-decarboxylase of Xylella fastidiosa (strain Temecula1 / ATCC 700964).